We begin with the raw amino-acid sequence, 647 residues long: Putative lipase YDL109C (647 aa).

S274 acts as the Charge relay system in catalysis. Positions 502–523 are disordered; that stretch reads PPPSPTLYEGTAAKEGETRKTR. The span at 513-523 shows a compositional bias: basic and acidic residues; sequence AAKEGETRKTR.

The protein belongs to the putative lipase ROG1 family.

Its function is as follows. Involved in lipid metabolism. In Saccharomyces cerevisiae (strain ATCC 204508 / S288c) (Baker's yeast), this protein is Putative lipase YDL109C.